The following is a 525-amino-acid chain: GMP synthase [glutamine-hydrolyzing] (525 aa).

One can recognise a Glutamine amidotransferase type-1 domain in the interval 16 to 205 (PVLVVDFGAQ…LHDFAGLGAQ (190 aa)). C93 (nucleophile) is an active-site residue. Catalysis depends on residues H179 and E181. One can recognise a GMPS ATP-PPase domain in the interval 206 to 399 (WTPANIANAL…LGLPEEIVAR (194 aa)). 233–239 (SGGVDSA) serves as a coordination point for ATP.

In terms of assembly, homodimer.

The catalysed reaction is XMP + L-glutamine + ATP + H2O = GMP + L-glutamate + AMP + diphosphate + 2 H(+). It participates in purine metabolism; GMP biosynthesis; GMP from XMP (L-Gln route): step 1/1. Catalyzes the synthesis of GMP from XMP. The protein is GMP synthase [glutamine-hydrolyzing] (guaA) of Mycobacterium tuberculosis (strain CDC 1551 / Oshkosh).